We begin with the raw amino-acid sequence, 296 residues long: Light-independent protochlorophyllide reductase iron-sulfur ATP-binding protein (296 aa).

Residues 39–44 (GIGKST) and lysine 68 contribute to the ATP site. Serine 43 serves as a coordination point for Mg(2+). [4Fe-4S] cluster contacts are provided by cysteine 124 and cysteine 158. ATP is bound at residue 209–210 (NR).

It belongs to the NifH/BchL/ChlL family. Homodimer. Protochlorophyllide reductase is composed of three subunits; ChlL, ChlN and ChlB. [4Fe-4S] cluster is required as a cofactor.

It catalyses the reaction chlorophyllide a + oxidized 2[4Fe-4S]-[ferredoxin] + 2 ADP + 2 phosphate = protochlorophyllide a + reduced 2[4Fe-4S]-[ferredoxin] + 2 ATP + 2 H2O. The protein operates within porphyrin-containing compound metabolism; chlorophyll biosynthesis (light-independent). Its function is as follows. Component of the dark-operative protochlorophyllide reductase (DPOR) that uses Mg-ATP and reduced ferredoxin to reduce ring D of protochlorophyllide (Pchlide) to form chlorophyllide a (Chlide). This reaction is light-independent. The L component serves as a unique electron donor to the NB-component of the complex, and binds Mg-ATP. The chain is Light-independent protochlorophyllide reductase iron-sulfur ATP-binding protein from Synechococcus sp. (strain WH7803).